The sequence spans 108 residues: MGVTVENISAGDGKTFPQPGDNVTIHYVGTLLDGSKFDSSRDRGTPFVCRIGQGQVIRGWDEGVPQLSVGQKANLICTPDYAYGARGFPPVIPPNSTLKFEVELLKVN.

Residues 20–108 enclose the PPIase FKBP-type domain; that stretch reads GDNVTIHYVG…KFEVELLKVN (89 aa).

It belongs to the FKBP-type PPIase family. FKBP1 subfamily.

Its subcellular location is the cytoplasm. The catalysed reaction is [protein]-peptidylproline (omega=180) = [protein]-peptidylproline (omega=0). Inhibited by both FK506 and rapamycin. In terms of biological role, PPIases accelerate the folding of proteins. It catalyzes the cis-trans isomerization of proline imidic peptide bonds in oligopeptides. The protein is FK506-binding protein 1 (FRR1) of Cryptococcus neoformans var. grubii serotype A (strain H99 / ATCC 208821 / CBS 10515 / FGSC 9487) (Filobasidiella neoformans var. grubii).